Here is a 193-residue protein sequence, read N- to C-terminus: Large ribosomal subunit protein uL11 (193 aa).

This sequence belongs to the universal ribosomal protein uL11 family. As to quaternary structure, part of the ribosomal stalk of the 50S ribosomal subunit. Interacts with L10 and the large rRNA to form the base of the stalk. L10 forms an elongated spine to which L12 dimers bind in a sequential fashion forming a multimeric L10(L12)X complex. In terms of processing, one or more lysine residues are methylated.

Its function is as follows. Forms part of the ribosomal stalk which helps the ribosome interact with GTP-bound translation factors. The chain is Large ribosomal subunit protein uL11 from Mycoplasmopsis synoviae (strain 53) (Mycoplasma synoviae).